The primary structure comprises 209 residues: Kynurenine formamidase (209 aa).

Phe18 lines the substrate pocket. Residues His48, His52, and Asp54 each contribute to the Zn(2+) site. His58 acts as the Proton donor/acceptor in catalysis. Zn(2+) is bound by residues His160 and Glu172.

It belongs to the Cyclase 1 superfamily. KynB family. Homodimer. Zn(2+) is required as a cofactor.

It catalyses the reaction N-formyl-L-kynurenine + H2O = L-kynurenine + formate + H(+). It functions in the pathway amino-acid degradation; L-tryptophan degradation via kynurenine pathway; L-kynurenine from L-tryptophan: step 2/2. In terms of biological role, catalyzes the hydrolysis of N-formyl-L-kynurenine to L-kynurenine, the second step in the kynurenine pathway of tryptophan degradation. In Bordetella avium (strain 197N), this protein is Kynurenine formamidase.